The chain runs to 539 residues: Phosphoenolpyruvate carboxykinase (ATP) (539 aa).

Substrate contacts are provided by arginine 64, tyrosine 206, and lysine 212. ATP is bound by residues lysine 212, histidine 231, and 247–255 (GLSGTGKTT). Mn(2+) contacts are provided by lysine 212 and histidine 231. Mn(2+) is bound at residue aspartate 268. ATP contacts are provided by residues glutamate 296, arginine 332, 448–449 (RI), and threonine 454. Residue arginine 332 coordinates substrate.

Belongs to the phosphoenolpyruvate carboxykinase (ATP) family. Monomer. Requires Mn(2+) as cofactor.

The protein localises to the cytoplasm. The enzyme catalyses oxaloacetate + ATP = phosphoenolpyruvate + ADP + CO2. It participates in carbohydrate biosynthesis; gluconeogenesis. Its function is as follows. Involved in the gluconeogenesis. Catalyzes the conversion of oxaloacetate (OAA) to phosphoenolpyruvate (PEP) through direct phosphoryl transfer between the nucleoside triphosphate and OAA. The polypeptide is Phosphoenolpyruvate carboxykinase (ATP) (Salmonella choleraesuis (strain SC-B67)).